A 101-amino-acid polypeptide reads, in one-letter code: Phosphoribosyl-AMP cyclohydrolase (101 aa).

Residue D71 coordinates Mg(2+). A Zn(2+)-binding site is contributed by C72. Residues D73 and D75 each coordinate Mg(2+). C88 and C95 together coordinate Zn(2+).

It belongs to the PRA-CH family. As to quaternary structure, homodimer. Mg(2+) serves as cofactor. Requires Zn(2+) as cofactor.

The protein resides in the cytoplasm. The enzyme catalyses 1-(5-phospho-beta-D-ribosyl)-5'-AMP + H2O = 1-(5-phospho-beta-D-ribosyl)-5-[(5-phospho-beta-D-ribosylamino)methylideneamino]imidazole-4-carboxamide. The protein operates within amino-acid biosynthesis; L-histidine biosynthesis; L-histidine from 5-phospho-alpha-D-ribose 1-diphosphate: step 3/9. In terms of biological role, catalyzes the hydrolysis of the adenine ring of phosphoribosyl-AMP. The sequence is that of Phosphoribosyl-AMP cyclohydrolase from Bacillus cereus (strain ZK / E33L).